A 268-amino-acid polypeptide reads, in one-letter code: Putative hydro-lyase ACICU_01268 (268 aa).

It belongs to the D-glutamate cyclase family.

The chain is Putative hydro-lyase ACICU_01268 from Acinetobacter baumannii (strain ACICU).